The sequence spans 89 residues: Small ribosomal subunit protein uS17 (89 aa).

This sequence belongs to the universal ribosomal protein uS17 family. In terms of assembly, part of the 30S ribosomal subunit.

In terms of biological role, one of the primary rRNA binding proteins, it binds specifically to the 5'-end of 16S ribosomal RNA. The sequence is that of Small ribosomal subunit protein uS17 from Xylella fastidiosa (strain Temecula1 / ATCC 700964).